The chain runs to 1342 residues: DNA-directed RNA polymerase subunit beta (1342 aa).

It belongs to the RNA polymerase beta chain family. The RNAP catalytic core consists of 2 alpha, 1 beta, 1 beta' and 1 omega subunit. When a sigma factor is associated with the core the holoenzyme is formed, which can initiate transcription.

It carries out the reaction RNA(n) + a ribonucleoside 5'-triphosphate = RNA(n+1) + diphosphate. Its function is as follows. DNA-dependent RNA polymerase catalyzes the transcription of DNA into RNA using the four ribonucleoside triphosphates as substrates. The sequence is that of DNA-directed RNA polymerase subunit beta from Salmonella choleraesuis (strain SC-B67).